The primary structure comprises 188 residues: FMN-dependent NADPH-azoreductase (188 aa).

This sequence belongs to the azoreductase type 2 family. In terms of assembly, homotetramer. It depends on FMN as a cofactor.

Its function is as follows. Catalyzes the reductive cleavage of azo bond in aromatic azo compounds to the corresponding amines. Requires NADPH, but not NADH, as an electron donor for its activity. The protein is FMN-dependent NADPH-azoreductase (azo1) of Staphylococcus haemolyticus (strain JCSC1435).